The sequence spans 270 residues: NAD kinase (270 aa).

The active-site Proton acceptor is the D45. Residues 45–46, 121–122, R147, D149, 160–165, and A184 contribute to the NAD(+) site; these read DG, NE, and TAYSKS.

The protein belongs to the NAD kinase family. It depends on a divalent metal cation as a cofactor.

The protein localises to the cytoplasm. The catalysed reaction is NAD(+) + ATP = ADP + NADP(+) + H(+). Its function is as follows. Involved in the regulation of the intracellular balance of NAD and NADP, and is a key enzyme in the biosynthesis of NADP. Catalyzes specifically the phosphorylation on 2'-hydroxyl of the adenosine moiety of NAD to yield NADP. This Lactobacillus helveticus (strain DPC 4571) protein is NAD kinase.